The following is a 523-amino-acid chain: Type 2 DNA topoisomerase 6 subunit B (523 aa).

Residues N48, D80, 101–102 (SK), 110–117 (GQQGLGCS), and K436 each bind ATP.

This sequence belongs to the TOP6B family. As to quaternary structure, homodimer. Heterotetramer of two Top6A and two Top6B chains.

The enzyme catalyses ATP-dependent breakage, passage and rejoining of double-stranded DNA.. Its function is as follows. Relaxes both positive and negative superturns and exhibits a strong decatenase activity. This chain is Type 2 DNA topoisomerase 6 subunit B, found in Methanothermobacter thermautotrophicus (strain ATCC 29096 / DSM 1053 / JCM 10044 / NBRC 100330 / Delta H) (Methanobacterium thermoautotrophicum).